A 159-amino-acid polypeptide reads, in one-letter code: Membrane protein FAM174B (159 aa).

The first 27 residues, 1-27 (MRAALPPARLLPLLLLLALLGAPAARA), serve as a signal peptide directing secretion. Residues 28-73 (SRAQSAAPPQPGAERQPRPPPGPGPGNATGTGSGEAAGGGGSSNSS) are disordered. The Extracellular segment spans residues 28–90 (SRAQSAAPPQ…ISSLLRDLHT (63 aa)). Residues 52–69 (PGNATGTGSGEAAGGGGS) show a composition bias toward gly residues. N-linked (GlcNAc...) asparagine glycosylation occurs at asparagine 54. The chain crosses the membrane as a helical span at residues 91 to 111 (LKAAVIVACAFTAFLIACLLL). Residues 112–159 (RVFRSGKRLKKTRKYDIITTPAERVEMAPLNEEDDEDEDSTVFDIKYR) lie on the Cytoplasmic side of the membrane.

The protein belongs to the FAM174 family.

It localises to the cell membrane. The protein localises to the golgi apparatus. In terms of biological role, essential for Golgi structural integrity. In Bos taurus (Bovine), this protein is Membrane protein FAM174B (FAM174B).